Consider the following 554-residue polypeptide: Dihydroxy-acid dehydratase (554 aa).

Aspartate 78 lines the Mg(2+) pocket. Cysteine 119 serves as a coordination point for [2Fe-2S] cluster. Residues aspartate 120 and lysine 121 each contribute to the Mg(2+) site. Lysine 121 carries the N6-carboxylysine modification. [2Fe-2S] cluster is bound at residue cysteine 192. Residue glutamate 443 coordinates Mg(2+). Serine 469 (proton acceptor) is an active-site residue.

The protein belongs to the IlvD/Edd family. Homodimer. Requires [2Fe-2S] cluster as cofactor. It depends on Mg(2+) as a cofactor.

The enzyme catalyses (2R)-2,3-dihydroxy-3-methylbutanoate = 3-methyl-2-oxobutanoate + H2O. It catalyses the reaction (2R,3R)-2,3-dihydroxy-3-methylpentanoate = (S)-3-methyl-2-oxopentanoate + H2O. It functions in the pathway amino-acid biosynthesis; L-isoleucine biosynthesis; L-isoleucine from 2-oxobutanoate: step 3/4. Its pathway is amino-acid biosynthesis; L-valine biosynthesis; L-valine from pyruvate: step 3/4. In terms of biological role, functions in the biosynthesis of branched-chain amino acids. Catalyzes the dehydration of (2R,3R)-2,3-dihydroxy-3-methylpentanoate (2,3-dihydroxy-3-methylvalerate) into 2-oxo-3-methylpentanoate (2-oxo-3-methylvalerate) and of (2R)-2,3-dihydroxy-3-methylbutanoate (2,3-dihydroxyisovalerate) into 2-oxo-3-methylbutanoate (2-oxoisovalerate), the penultimate precursor to L-isoleucine and L-valine, respectively. The chain is Dihydroxy-acid dehydratase from Shouchella clausii (strain KSM-K16) (Alkalihalobacillus clausii).